A 760-amino-acid polypeptide reads, in one-letter code: MAFVAGVIRRLDETVVNRIAAGEVIQRPANAIKEMIENCLDAKSTNIQVVVKEGGLKLIQIQDNGTGIRKEDLDIVCERFTTSKLQTFEDLASISTYGFRGEALASISHVAHVTITTKTADGKCAYRASYSDGKLQAPPKPCAGNQGTLITVEDLFYNIITRRKALKNPSEEYGKILEVVGRYSIHNSGISFSVKKQGETVSDVRTLPNATTVDNIRSIFGNAVSRELIEVGCEDKTLAFKMNGYISNANYSVKKCIFLLFINHRLVESAALRKAIETVYAAYLPKNTHPFLYLSLEISPQNVDVNVHPTKHEVHFLHEESILQRVQQHIESKLLGSNSSRMYFTQTLLPGLAGPSGEAARPTTGVASSSTSGSGDKVYAYQMVRTDSREQKLDAFLQPVSSLGPSQPQDPAPVRGARTEGSPERATREDEEMLALPAPAEAAAESENLERESLMETSDAAQKAAPTSSPGSSRKRHREDSDVEMVENASGKEMTAACYPRRRIINLTSVLSLQEEISERCHETLREMLRNHSFVGCVNPQWALAQHQTKLYLLNTTKLSEELFYQILIYDFANFGVLRLSEPAPLFDLAMLALDSPESGWTEDDGPKEGLAEYIVEFLKKKAEMLADYFSVEIDEEGNLIGLPLLIDSYVPPLEGLPIFILRLATEVNWDEEKECFESLSKECAMFYSIRKQYILEESTLSGQQSDMPGSTSKPWKWTVEHIIYKAFRSHLLPPKHFTEDGNVLQLANLPDLYKVFERC.

The residue at position 33 (lysine 33) is an N6-acetyllysine. ATP contacts are provided by residues asparagine 38, aspartate 63, 82-84, and 100-104; these read TSK and RGEAL. Lysine 241 is modified (N6-acetyllysine). The disordered stretch occupies residues 354-375; sequence GPSGEAARPTTGVASSSTSGSG. Residues 363–375 are compositionally biased toward low complexity; it reads TTGVASSSTSGSG. Lysine 377 bears the N6-acetyllysine mark. Residues 400–409 show a composition bias toward polar residues; that stretch reads VSSLGPSQPQ. Positions 400–488 are disordered; that stretch reads VSSLGPSQPQ…EDSDVEMVEN (89 aa). Residues 412 to 654 form an interaction with EXO1 region; that stretch reads APVRGARTEG…LLIDSYVPPL (243 aa). Basic and acidic residues predominate over residues 417 to 428; the sequence is ARTEGSPERATR. Over residues 434 to 446 the composition is skewed to low complexity; it reads LALPAPAEAAAES. The span at 455–472 shows a compositional bias: polar residues; it reads METSDAAQKAAPTSSPGS. The Nuclear localization signal signature appears at 475–478; sequence KRHR. Phosphoserine is present on serine 481.

Belongs to the DNA mismatch repair MutL/HexB family. Component of the DNA mismatch repair (MMR) complex composed at least of MSH2, MSH3, MSH6, PMS1 and MLH1. Heterodimer of MLH1 and PMS2 (MutL alpha), MLH1 and PMS1 (MutL beta) or MLH1 and MLH3 (MutL gamma). Forms a ternary complex with MutS alpha (MSH2-MSH6) or MutS beta (MSH2-MSH3). Part of the BRCA1-associated genome surveillance complex (BASC), which contains BRCA1, MSH2, MSH6, MLH1, ATM, BLM, PMS2 and the RAD50-MRE11-NBS1 protein complex. This association could be a dynamic process changing throughout the cell cycle and within subnuclear domains. Interacts with MCM9; the interaction recruits MLH1 to chromatin. Interacts with MCM8. Interacts with PMS2. Interacts with MBD4. Interacts with EXO1. Interacts with MTMR15/FAN1. In terms of processing, acetylated. Deacetylated by HDAC6 which prevents the MutL alpha complex, formed by the MLH1-PMS2 heterodimer, from being recruited to the MutS alpha complex, formed by the MSH2-MSH6 heterodimer, leading to tolerance of DNA damage.

The protein resides in the nucleus. It is found in the chromosome. In terms of biological role, heterodimerizes with Pms2 to form MutL alpha, a component of the post-replicative DNA mismatch repair system (MMR). DNA repair is initiated by MutS alpha (Msh2-Msh6) or MutS beta (MSH2-MSH3) binding to a dsDNA mismatch, then MutL alpha is recruited to the heteroduplex. Assembly of the MutL-MutS-heteroduplex ternary complex in presence of RFC and PCNA is sufficient to activate endonuclease activity of Pms2. It introduces single-strand breaks near the mismatch and thus generates new entry points for the exonuclease EXO1 to degrade the strand containing the mismatch. DNA methylation would prevent cleavage and therefore assure that only the newly mutated DNA strand is going to be corrected. MutL alpha (Mlh1-Pms2) interacts physically with the clamp loader subunits of DNA polymerase III, suggesting that it may play a role to recruit the DNA polymerase III to the site of the MMR. Also implicated in DNA damage signaling, a process which induces cell cycle arrest and can lead to apoptosis in case of major DNA damages. Heterodimerizes with Mlh3 to form MutL gamma which plays a role in meiosis. This Mus musculus (Mouse) protein is DNA mismatch repair protein Mlh1 (Mlh1).